The primary structure comprises 232 residues: uncharacterized protein (232 aa).

A run of 5 helical transmembrane segments spans residues L69–F91, F104–L126, F139–L161, I166–S188, and F200–I219.

The protein localises to the cell membrane. This is an uncharacterized protein from Bacillus subtilis (strain 168).